The sequence spans 968 residues: RNA polymerase-associated protein RapA (968 aa).

One can recognise a Helicase ATP-binding domain in the interval 163 to 332; it reads EVGRRYAPRV…FARLRLLDPD (170 aa). Residue 176–183 coordinates ATP; that stretch reads DEVGLGKT. The short motif at 278–281 is the DEAH box element; the sequence is DEAH. The 165-residue stretch at 491–655 folds into the Helicase C-terminal domain; the sequence is RVDWLIEFLK…EFAEELLNVL (165 aa).

This sequence belongs to the SNF2/RAD54 helicase family. RapA subfamily. Interacts with the RNAP. Has a higher affinity for the core RNAP than for the holoenzyme. Its ATPase activity is stimulated by binding to RNAP.

Its function is as follows. Transcription regulator that activates transcription by stimulating RNA polymerase (RNAP) recycling in case of stress conditions such as supercoiled DNA or high salt concentrations. Probably acts by releasing the RNAP, when it is trapped or immobilized on tightly supercoiled DNA. Does not activate transcription on linear DNA. Probably not involved in DNA repair. This Shewanella oneidensis (strain ATCC 700550 / JCM 31522 / CIP 106686 / LMG 19005 / NCIMB 14063 / MR-1) protein is RNA polymerase-associated protein RapA.